Here is a 529-residue protein sequence, read N- to C-terminus: Peptide chain release factor 3 (529 aa).

The tr-type G domain maps to A11–M280. Residues S20–T27, D88–H92, and N142–D145 each bind GTP.

This sequence belongs to the TRAFAC class translation factor GTPase superfamily. Classic translation factor GTPase family. PrfC subfamily.

The protein localises to the cytoplasm. In terms of biological role, increases the formation of ribosomal termination complexes and stimulates activities of RF-1 and RF-2. It binds guanine nucleotides and has strong preference for UGA stop codons. It may interact directly with the ribosome. The stimulation of RF-1 and RF-2 is significantly reduced by GTP and GDP, but not by GMP. This Photorhabdus laumondii subsp. laumondii (strain DSM 15139 / CIP 105565 / TT01) (Photorhabdus luminescens subsp. laumondii) protein is Peptide chain release factor 3.